A 100-amino-acid chain; its full sequence is Aspartyl/glutamyl-tRNA(Asn/Gln) amidotransferase subunit C (100 aa).

This sequence belongs to the GatC family. In terms of assembly, heterotrimer of A, B and C subunits.

It catalyses the reaction L-glutamyl-tRNA(Gln) + L-glutamine + ATP + H2O = L-glutaminyl-tRNA(Gln) + L-glutamate + ADP + phosphate + H(+). The catalysed reaction is L-aspartyl-tRNA(Asn) + L-glutamine + ATP + H2O = L-asparaginyl-tRNA(Asn) + L-glutamate + ADP + phosphate + 2 H(+). Its function is as follows. Allows the formation of correctly charged Asn-tRNA(Asn) or Gln-tRNA(Gln) through the transamidation of misacylated Asp-tRNA(Asn) or Glu-tRNA(Gln) in organisms which lack either or both of asparaginyl-tRNA or glutaminyl-tRNA synthetases. The reaction takes place in the presence of glutamine and ATP through an activated phospho-Asp-tRNA(Asn) or phospho-Glu-tRNA(Gln). This Staphylococcus epidermidis (strain ATCC 35984 / DSM 28319 / BCRC 17069 / CCUG 31568 / BM 3577 / RP62A) protein is Aspartyl/glutamyl-tRNA(Asn/Gln) amidotransferase subunit C.